The following is a 95-amino-acid chain: Cobalt transport protein CbiN (95 aa).

Transmembrane regions (helical) follow at residues 5–25 and 67–87; these read HIILLAIVAIIIALPLIIYAG and LLFALQAAIGAIIIGYYIGYY.

The protein belongs to the CbiN family. Forms an energy-coupling factor (ECF) transporter complex composed of an ATP-binding protein (A component, CbiO), a transmembrane protein (T component, CbiQ) and 2 possible substrate-capture proteins (S components, CbiM and CbiN) of unknown stoichimetry.

The protein localises to the cell membrane. It functions in the pathway cofactor biosynthesis; adenosylcobalamin biosynthesis. Its function is as follows. Part of the energy-coupling factor (ECF) transporter complex CbiMNOQ involved in cobalt import. This chain is Cobalt transport protein CbiN, found in Methanocaldococcus jannaschii (strain ATCC 43067 / DSM 2661 / JAL-1 / JCM 10045 / NBRC 100440) (Methanococcus jannaschii).